The following is a 318-amino-acid chain: tRNA dimethylallyltransferase (318 aa).

28-35 (GPTGAGKS) is an ATP binding site. Position 30–35 (30–35 (TGAGKS)) interacts with substrate. The interaction with substrate tRNA stretch occupies residues 53–56 (DSMQ).

This sequence belongs to the IPP transferase family. As to quaternary structure, monomer. The cofactor is Mg(2+).

The catalysed reaction is adenosine(37) in tRNA + dimethylallyl diphosphate = N(6)-dimethylallyladenosine(37) in tRNA + diphosphate. Catalyzes the transfer of a dimethylallyl group onto the adenine at position 37 in tRNAs that read codons beginning with uridine, leading to the formation of N6-(dimethylallyl)adenosine (i(6)A). The polypeptide is tRNA dimethylallyltransferase (Parafrankia sp. (strain EAN1pec)).